A 436-amino-acid chain; its full sequence is 3-ketoacyl-CoA thiolase (436 aa).

Cysteine 99 (acyl-thioester intermediate) is an active-site residue. Catalysis depends on proton acceptor residues histidine 392 and cysteine 422.

Belongs to the thiolase-like superfamily. Thiolase family. As to quaternary structure, heterotetramer of two alpha chains (FadJ) and two beta chains (FadI).

Its subcellular location is the cytoplasm. The enzyme catalyses an acyl-CoA + acetyl-CoA = a 3-oxoacyl-CoA + CoA. It participates in lipid metabolism; fatty acid beta-oxidation. Its function is as follows. Catalyzes the final step of fatty acid oxidation in which acetyl-CoA is released and the CoA ester of a fatty acid two carbons shorter is formed. The polypeptide is 3-ketoacyl-CoA thiolase (Shigella flexneri).